Consider the following 388-residue polypeptide: Chorismate synthase (388 aa).

NADP(+)-binding residues include arginine 39 and arginine 45. FMN-binding positions include 130–132 (RSS), 251–252 (NA), glycine 296, 311–315 (KPIPT), and arginine 337.

It belongs to the chorismate synthase family. As to quaternary structure, homotetramer. Requires FMNH2 as cofactor.

The catalysed reaction is 5-O-(1-carboxyvinyl)-3-phosphoshikimate = chorismate + phosphate. The protein operates within metabolic intermediate biosynthesis; chorismate biosynthesis; chorismate from D-erythrose 4-phosphate and phosphoenolpyruvate: step 7/7. Catalyzes the anti-1,4-elimination of the C-3 phosphate and the C-6 proR hydrogen from 5-enolpyruvylshikimate-3-phosphate (EPSP) to yield chorismate, which is the branch point compound that serves as the starting substrate for the three terminal pathways of aromatic amino acid biosynthesis. This reaction introduces a second double bond into the aromatic ring system. The chain is Chorismate synthase from Lactococcus lactis subsp. cremoris (strain MG1363).